Consider the following 59-residue polypeptide: Large ribosomal subunit protein uL30 (59 aa).

This sequence belongs to the universal ribosomal protein uL30 family. In terms of assembly, part of the 50S ribosomal subunit.

The chain is Large ribosomal subunit protein uL30 from Mycobacterium sp. (strain JLS).